Consider the following 629-residue polypeptide: Chaperone protein HtpG (629 aa).

The interval 1-336 (MSSTENNGTA…TEDLSLNVSR (336 aa)) is a; substrate-binding. The segment at 337-549 (EMVQSSPVMA…KDAIDSQLER (213 aa)) is b. Residues 550-629 (MMKMMNTPMP…ELIEAATLTR (80 aa)) form a c region.

Belongs to the heat shock protein 90 family. As to quaternary structure, homodimer.

It localises to the cytoplasm. Its function is as follows. Molecular chaperone. Has ATPase activity. The chain is Chaperone protein HtpG from Chlorobium chlorochromatii (strain CaD3).